A 392-amino-acid chain; its full sequence is Phosphoglycerate kinase (392 aa).

Residues 21 to 23, Arg-36, 59 to 62, Arg-114, and Arg-147 each bind substrate; these read DLN and HLGR. ATP contacts are provided by residues Lys-198, Glu-320, and 346–349; that span reads GGDT.

This sequence belongs to the phosphoglycerate kinase family. As to quaternary structure, monomer.

It is found in the cytoplasm. It carries out the reaction (2R)-3-phosphoglycerate + ATP = (2R)-3-phospho-glyceroyl phosphate + ADP. Its pathway is carbohydrate degradation; glycolysis; pyruvate from D-glyceraldehyde 3-phosphate: step 2/5. This Nitrosomonas eutropha (strain DSM 101675 / C91 / Nm57) protein is Phosphoglycerate kinase.